Here is an 82-residue protein sequence, read N- to C-terminus: Consomatin Ar1 (82 aa).

The first 22 residues, 1–22 (MQTAYWVVVMMMMVWVTAPVSE), serve as a signal peptide directing secretion. Positions 23 to 60 (GGKLSDVIWGLVPDDLTPQIILQILNASRHAYRRVRPR) are excised as a propeptide. Residues C64 and C69 are joined by a disulfide bond. Position 66 is a D-tryptophan (W66). 4-hydroxyproline is present on residues P70, P71, and P73. Residues 74-82 (QWIHPLVKR) constitute a propeptide that is removed on maturation.

Belongs to the conotoxin C superfamily. Consomatin family. Expressed by the venom duct.

The protein resides in the secreted. In terms of biological role, moderately activates human somatostatin receptors (SSTR) with a preferential activation of SSTR1 and SSTR4. In vivo, does not cause behavioral changes in mice within a few minutes of intracranial injection, but causes a progressive loss of movement thereafter. Four to five hours after injection, mice recover, even with the highest dose tested. Shows antinociception and antihyperalgesia activities in two mouse models of acute pain, most probably by acting outside the central nervous system. This is Consomatin Ar1 from Conus arenatus (Sand-dusted cone).